The primary structure comprises 116 residues: Large ribosomal subunit protein bL20 (116 aa).

It belongs to the bacterial ribosomal protein bL20 family.

Binds directly to 23S ribosomal RNA and is necessary for the in vitro assembly process of the 50S ribosomal subunit. It is not involved in the protein synthesizing functions of that subunit. This is Large ribosomal subunit protein bL20 from Fusobacterium nucleatum subsp. nucleatum (strain ATCC 25586 / DSM 15643 / BCRC 10681 / CIP 101130 / JCM 8532 / KCTC 2640 / LMG 13131 / VPI 4355).